A 309-amino-acid polypeptide reads, in one-letter code: Cysteinyl leukotriene receptor 2 (309 aa).

At 1-26 (MEVTGTPSSYSNRNCTIENFKKEFYP) the chain is on the extracellular side. An N-linked (GlcNAc...) asparagine glycan is attached at N14. The helical transmembrane segment at 27 to 47 (IIYLIIFFWGALGNGFSIYVF) threads the bilayer. The Cytoplasmic portion of the chain corresponds to 48-56 (LQTCKKSTS). A helical transmembrane segment spans residues 57–77 (VNVFMLNLATSDFLFISTLPF). The Extracellular segment spans residues 78–98 (RADYYFRGSNWIFGDLACRVM). Residues C95 and C171 are joined by a disulfide bond. Residues 99 to 119 (SYSLYVNMYTSIYFLTVLSVV) traverse the membrane as a helical segment. Residues 120–138 (RFLATVHPFRMFHVTSVRS) lie on the Cytoplasmic side of the membrane. The helical transmembrane segment at 139–159 (AWILCGIIWVFIMASSALLLV) threads the bilayer. The Extracellular segment spans residues 160-187 (NGQEEKDNIISCLELSPQKFKSLLIMNH). Residues 188-208 (IAVAVGFLLPFLTLTVCYLLI) form a helical membrane-spanning segment. Over 209 to 229 (IRILLKAEIPESGPRAAHRKA) the chain is Cytoplasmic. A helical transmembrane segment spans residues 230-250 (LTTIVIAMITFLLCFLPYHAL). At 251–271 (RTLHLVTWDKDSCGDVLHKAT) the chain is on the extracellular side. Residues 272–292 (VITLTMAAANSCFNPFLYYFA) form a helical membrane-spanning segment. Over 293–309 (GENFKARLRAIFSKVHL) the chain is Cytoplasmic.

It belongs to the G-protein coupled receptor 1 family. In terms of tissue distribution, widely expressed at low levels, with highest expression in the spleen, thymus and adrenal gland, and lower in the kidney, brain and peripheral blood leukocytes.

The protein resides in the cell membrane. Receptor for cysteinyl leukotrienes. The response is mediated via a G-protein that activates a phosphatidylinositol-calcium second messenger system. The rank order of affinities for the leukotrienes is LTC4 = LTD4 &gt;&gt; LTE4. The sequence is that of Cysteinyl leukotriene receptor 2 (Cysltr2) from Mus musculus (Mouse).